The following is a 7192-amino-acid chain: Nonribosomal peptide synthetase gloA (7192 aa).

Positions 1 to 48 (MTPSRSLENGEKQMNWNESPQTASPKNVLRDSNSNGNYVNGHGTNING) are enriched in polar residues. The segment at 1–52 (MTPSRSLENGEKQMNWNESPQTASPKNVLRDSNSNGNYVNGHGTNINGDGSD) is disordered. One can recognise a Carrier 1 domain in the interval 105-181 (HSTSKFKEEF…GLFATANFRP (77 aa)). Position 142 is an O-(pantetheine 4'-phosphoryl)serine (serine 142). Positions 239-634 (EDVYPCTPLQ…TYTVQCLCNP (396 aa)) are condensation 1. Residues 675-1047 (QDQVNIQPAK…SLMYLGRCDS (373 aa)) are adenylation 1. The Carrier 2 domain maps to 1190-1266 (APSTDAEKQV…DLAFVIQRRL (77 aa)). Serine 1227 carries the post-translational modification O-(pantetheine 4'-phosphoryl)serine. Residues 1316–1736 (EDIYPCTPLQ…MSWLSDYDEE (421 aa)) are condensation 2. Residues 1758-2154 (QEQTKLRPNA…GRRDTQIKIR (397 aa)) are adenylation 2. In terms of domain architecture, Carrier 3 spans 2288 to 2364 (APSTREECLV…ELAELLAKRS (77 aa)). Serine 2325 is modified (O-(pantetheine 4'-phosphoryl)serine). Positions 2407–2829 (VEDVYPCTPL…LIAPEDQEQI (423 aa)) are condensation 3. Residues 2849-3245 (YKQVMARPQA…GRRDDQIKIR (397 aa)) form an adenylation 3 region. One can recognise a Carrier 4 domain in the interval 3378-3455 (TPSTKMEKVI…DLASVMTEHR (78 aa)). Serine 3415 is subject to O-(pantetheine 4'-phosphoryl)serine. Residues 3502–3891 (EDIYPCTALQ…NGVLDQFVYI (390 aa)) are condensation 4. The tract at residues 3920 to 4320 (QEQALARPTA…ARRDMQVKIR (401 aa)) is adenylation 4. The region spanning 4453-4529 (LPSTQVELQL…ELAVILDGRK (77 aa)) is the Carrier 5 domain. Serine 4490 carries the O-(pantetheine 4'-phosphoryl)serine modification. The interval 4574–4971 (EDIYPCTPLQ…QFEYVVQKFH (398 aa)) is condensation 5. Residues 5013–5414 (DDHVAARPMA…GRQDLQVKIR (402 aa)) are adenylation 5. Positions 5551–5627 (APDTDLGRLI…DLVNTLSNRS (77 aa)) constitute a Carrier 6 domain. Serine 5588 bears the O-(pantetheine 4'-phosphoryl)serine mark. Residues 5674 to 6071 (EDVYPSTPLQ…CVVQRILTQS (398 aa)) are condensation 6. Residues 6111 to 6507 (QAQVKKSPAA…GRRDLQVKIR (397 aa)) form an adenylation 6 region. Positions 6645–6721 (NPSTTMERQL…DLAVVLTDRL (77 aa)) constitute a Carrier 7 domain. Serine 6682 carries the O-(pantetheine 4'-phosphoryl)serine modification. The interval 6795-7178 (NGPCDTRALK…NPLSPVKQVL (384 aa)) is condensation 7.

It belongs to the NRP synthetase family.

It functions in the pathway mycotoxin biosynthesis. In terms of biological role, nonribosomal peptide synthetase; part of the gene cluster that mediates the biosynthesis of pneumocandins, lipohexapeptides of the echinocandin family that prevent fungal cell wall formation by non-competitive inhibition of beta-1,3-glucan synthase. The 10,12-dimethylmyristoyl side chain is synthesized by the reducing polyketide synthase gloL/GLPKS4. The thioesterase gloN/GLHYD exclusively interacts with gloL/GLPKS4 to maintain turnover of the polyketide side chain. The 10R,12S-dimethylmyristic acid is then transferred to the first thiolation domain of the nonribosomal peptide synthetase gloA/GLNRPS4 by the acyl-AMP ligase gloD/GLligase, followed by its acylation to L-ornithine to trigger elongation of the cyclic hexapeptide. L-ornithine, 4R-hydroxyl-L-proline (generated from L-proline by the dioxygenase gloF/GLOXY2), 3S-hydroxyl-L-homotyrosine (generated by gloG/GLHtyB, gloH/GLHtyA, gloI/GLHtyC, gloJ/GLHtyD and hydroxylated at C-3 by the dioxygenase gloM/GLOXY1), 3R-hydroxyl-L-glutamine (generated from L-glutamine probably by the dioxygenase gloE/GLOXY3) and 3S-hydroxyl-L-proline (generated from L-proline by the dioxygenase gloF/GLOXY2 to yield pneumocandin B0), or 3S-hydroxyl-4S-methyl-L-proline (generated from L-leucine by the dioxygenase gloC/GLOXY4 to yield pneumocandin A0) are sequentially added to the growing chain. The last C domain of gloA/GLNRPS4 is proposed to be responsible for cyclization by condensation to form the peptide bond between L-ornithine and 3S-hydroxyl-4S-methyl-L-proline (for pneumocandin A0) or 3S-hydroxyl-L-proline (for pneumocandin B0). Finally, the subsequent C-4 hydroxylation of 3S-hydroxyl-L-homotyrosine and L-ornithine dihydroxylation at C-4 and C-5 are performed by the cytochrome P450 monooxygenases gloP/GLP450-1 and gloO/GLP450-2, respectively. The polypeptide is Nonribosomal peptide synthetase gloA (Glarea lozoyensis (strain ATCC 20868 / MF5171)).